The following is a 183-amino-acid chain: Apo-citrate lyase phosphoribosyl-dephospho-CoA transferase (183 aa).

The protein belongs to the CitX family.

It catalyses the reaction apo-[citrate lyase ACP] + 2'-(5''-triphospho-alpha-D-ribosyl)-3'-dephospho-CoA = holo-[citrate lyase ACP] + diphosphate. Transfers 2-(5''-triphosphoribosyl)-3'-dephosphocoenzyme-A on a serine residue to the apo-acyl carrier protein (gamma chain) of the citrate lyase to yield holo-acyl carrier protein. The chain is Apo-citrate lyase phosphoribosyl-dephospho-CoA transferase from Escherichia coli O139:H28 (strain E24377A / ETEC).